We begin with the raw amino-acid sequence, 155 residues long: MGRFIFVSFGLLVVFLSLSGTAADCLPGWSSYIRFCYQPFKLLKTWEDAERFCTEQANGGHLVSFESAREADFVAGVLSENIKIKPYVWIGLRVQNEGQQCSSKWSDSSKVSYENLVEPFSKKCFVLKKDTGFRTWENVYCGLKHVFMCKYLKPR.

Residues 1-23 (MGRFIFVSFGLLVVFLSLSGTAA) form the signal peptide. Intrachain disulfides connect cysteine 25–cysteine 36, cysteine 53–cysteine 149, and cysteine 124–cysteine 141. Positions 32–150 (YIRFCYQPFK…CGLKHVFMCK (119 aa)) constitute a C-type lectin domain.

This sequence belongs to the snaclec family. As to quaternary structure, heterodimer of subunits alpha and beta; disulfide-linked. In terms of tissue distribution, expressed by the venom gland.

The protein localises to the secreted. Is a potent glycoprotein Ibalpha (GP1BA) antagonist. Concentration-dependently inhibits botrocetin-, ristocetin- and low dose thrombin-induced platelet aggregation. Inhibits platelet adhesion only through inhibiting the vWF interaction with GP1BA, but has minimal effect on other platelet receptors, such as alpha-IIb/beta-3 (ITGA2B/ITGB3) or alpha-2/beta-1 (ITGA2/ITGB1). Causes an instant severe thrombocytopenia in rats and is not lethal to mice. The chain is Snaclec agkicetin-C subunit alpha from Deinagkistrodon acutus (Hundred-pace snake).